The chain runs to 434 residues: GPI-anchor transamidase component PIGU (434 aa).

At 1-3 (MAA) the chain is on the cytoplasmic side. Residues 4–22 (PLALVLVVAVTVRAALFRS) traverse the membrane as a helical segment. Residues 23-78 (SLAEFISERVEVVSPLSSWKRVVEGLALLDLGVSPYSGAVFHETPLIIYLFHFLID) are Lumenal-facing. A helical membrane pass occupies residues 79 to 99 (YAELVFMITDALTAIALYFAI). Over 100–136 (QDFNKVVFKKQKLLLELDQYAPDVAELIRTPMEMRYI) the chain is Cytoplasmic. 4 helical membrane passes run 137 to 157 (PLKV…VAKS), 158 to 177 (TCAI…IKGS), 178 to 193 (VFLS…YQSL), and 194 to 204 (YPVTLFAPGLL). Over 205 to 221 (YLLQRQYIPVKVKSKAF) the chain is Cytoplasmic. Residue K215 coordinates a cardiolipin. A helical transmembrane segment spans residues 222–243 (WIFSWEYAMMYTGSLVVIVCLS). Topologically, residues 244-285 (FFLLSSWDFIPAVYGFILSVPDLTPNIGLFWYFFAEMFEHFS) are lumenal. A helical transmembrane segment spans residues 286 to 305 (LFFVCVFQINVFFYTVPLAI). The Cytoplasmic segment spans residues 306 to 310 (KLKEH). Position 308 (K308) interacts with a cardiolipin. 2 consecutive transmembrane segments (helical) span residues 311–330 (PIFF…SYPT) and 331–344 (VGDV…FPVW). Over 345 to 353 (NHLYRFLRN) the chain is Cytoplasmic. The helical transmembrane segment at 354–371 (IFVLTCIIIVCSLLFPVL) threads the bilayer. At 372 to 383 (WHLWIYAGSANS) the chain is on the lumenal side. Positions 382 and 384 each coordinate a 2-acyl-6-[6-phosphoethanolamine-alpha-D-mannosyl-(1-&gt;2)-6-phosphoethanolamine-alpha-D-mannosyl-(1-&gt;6)-2-phosphoethanolamine-alpha-D-mannosyl-(1-&gt;4)-alpha-D-glucosaminyl]-1-(1-radyl,2-acyl-sn-glycero-3-phospho)-1D-myo-inositol. Residues 384 to 405 (NFFYAITLTFNVGQILLISDYF) form a helical membrane-spanning segment. Residues 406-434 (YAFLRREYYLTHGLYLTAKDGTEAMLVLK) are Cytoplasmic-facing.

This sequence belongs to the PIGU family. Heteropentamer. Part of the GPI-anchor transamidase complex, consisting of PIGK, PIGT, PIGS, PIGU and GAA1.

The protein resides in the endoplasmic reticulum membrane. The protein operates within glycolipid biosynthesis; glycosylphosphatidylinositol-anchor biosynthesis. Its function is as follows. Component of the glycosylphosphatidylinositol-anchor (GPI-anchor) transamidase (GPI-T) complex that catalyzes the formation of the linkage between a proprotein and a GPI-anchor and participates in GPI anchored protein biosynthesis. Binds the lipid portion of GPI-anchor. May act as an organizer in the transmembrane layer to recruit other subunits, and thus is essential for assembly of the complex. The chain is GPI-anchor transamidase component PIGU from Mus musculus (Mouse).